A 400-amino-acid chain; its full sequence is PHD finger protein 24 (400 aa).

A lipid anchor (N-myristoyl glycine) is attached at glycine 2. Positions 30 to 108 (DRPSIRRTGE…FTPPAFIRPT (79 aa)) are disordered. Arginine 36 carries the post-translational modification Omega-N-methylarginine. Serine 43 is subject to Phosphoserine. Threonine 47 carries the post-translational modification Phosphothreonine. Serine 51 bears the Phosphoserine mark. Residues 78-97 (AWERLRDGRGVEPEEFDRTG) show a composition bias toward basic and acidic residues. The segment at 129–190 (NDEMCDVCEV…TGWSCHYCDN (62 aa)) adopts a PHD-type zinc-finger fold.

The sequence is that of PHD finger protein 24 from Pongo abelii (Sumatran orangutan).